A 295-amino-acid chain; its full sequence is Nucleotide-binding protein Sare_3328 (295 aa).

19–26 (GVSGGGRS) provides a ligand contact to ATP. GTP is bound at residue 70–73 (DVRS).

It belongs to the RapZ-like family.

In terms of biological role, displays ATPase and GTPase activities. This chain is Nucleotide-binding protein Sare_3328, found in Salinispora arenicola (strain CNS-205).